The sequence spans 119 residues: Large ribosomal subunit protein uL22 (119 aa).

It belongs to the universal ribosomal protein uL22 family. Part of the 50S ribosomal subunit.

This protein binds specifically to 23S rRNA; its binding is stimulated by other ribosomal proteins, e.g. L4, L17, and L20. It is important during the early stages of 50S assembly. It makes multiple contacts with different domains of the 23S rRNA in the assembled 50S subunit and ribosome. In terms of biological role, the globular domain of the protein is located near the polypeptide exit tunnel on the outside of the subunit, while an extended beta-hairpin is found that lines the wall of the exit tunnel in the center of the 70S ribosome. This Chlorobaculum tepidum (strain ATCC 49652 / DSM 12025 / NBRC 103806 / TLS) (Chlorobium tepidum) protein is Large ribosomal subunit protein uL22.